A 689-amino-acid chain; its full sequence is Putative pentatricopeptide repeat-containing protein At3g15130 (689 aa).

14 PPR repeats span residues 5–39, 40–70, 71–105, 106–140, 141–171, 172–206, 209–243, 246–276, 277–311, 312–342, 347–377, 378–412, 413–448, and 449–479; these read QRQNLVSILRVCTRKGLSDQGGQVHCYLLKSGSGL, NLITSNYLIDMYCKCREPLMAYKVFDSMPER, NVVSWSALMSGHVLNGDLKGSLSLFSEMGRQGIYP, NEFTFSTNLKACGLLNALEKGLQIHGFCLKIGFEM, MVEVGNSLVDMYSKCGRINEAEKVFRRIVDR, SLISWNAMIAGFVHAGYGSKALDTFGMMQEANIKE, DEFTLTSLLKACSSTGMIYAGKQIHGFLVRSGFHC, SATITGSLVDLYVKCGYLFSARKAFDQIKEK, TMISWSSLILGYAQEGEFVEAMGLFKRLQELNSQI, DSFALSSIIGVFADFALLRQGKQMQALAVKL, ETSVLNSVVDMYLKCGLVDEAEKCFAEMQLK, DVISWTVVITGYGKHGLGKKSVRIFYEMLRHNIEP, DEVCYLAVLSACSHSGMIKEGEELFSKLLETHGIKP, and RVEHYACVVDLLGRAGRLKEAKHLIDTMPIK. The type E motif stretch occupies residues 484–559; sequence IWQTLLSLCR…EAGMSWVEIE (76 aa). Residues 560-590 form a type E(+) motif region; that stretch reads REVHFFRSGEDSHPLTPVIQETLKEAERRLR. Residues 592–689 are type DYW motif; the sequence is ELGYVYGLKH…DGCCSCGDYW (98 aa).

It belongs to the PPR family. PCMP-H subfamily.

The polypeptide is Putative pentatricopeptide repeat-containing protein At3g15130 (PCMP-H86) (Arabidopsis thaliana (Mouse-ear cress)).